A 455-amino-acid chain; its full sequence is MNLTDTVATILAILALTAGTGVFVAAEFSLTALDRSTVEANARGGTSRDRFIQRAHHRLSFQLSGAQLGISITTLATGYLTEPLVAELPHPGLVAVGMSDRVADGLITFFALVIVTSLSMVFGELVPKYLAVARPLRTARSVVAGQVLFSLLLTPAIRLTNGAANWIVRRLGIEPAEELRSARTPQELVSLVRSSARSGALDDATAWLMRRSLQFGALTAEELMTPRSKIVALQTDDTIADLVAAAAASGFSRFPVVEGDLDATVGIVHVKQVFEVPPGDRAHTLLTTVAEPVAVVPSTLDGDAVMAQVRASALQTAMVVDEYGGTAGMVTLEDLIEEIVGDVRDEHDDATPDVVAAGNGWRVSGLLRIDEVASATGYRAPDGPYETISGLVLRELGHIPVAGETVELTALDQDGLPDDSMRWLATVIQMDGRRIDLLELIKMGGHADPGSGRGR.

The 204-residue stretch at 2 to 205 (NLTDTVATIL…ARSGALDDAT (204 aa)) folds into the CNNM transmembrane domain. A run of 4 helical transmembrane segments spans residues 6–26 (TVAT…FVAA), 68–88 (LGIS…VAEL), 106–126 (LITF…GELV), and 148–168 (LFSL…NWIV). 2 consecutive CBS domains span residues 224–285 (MTPR…AHTL) and 286–346 (LTTV…VRDE).

This sequence belongs to the UPF0053 family.

Its subcellular location is the cell membrane. This Mycobacterium tuberculosis (strain CDC 1551 / Oshkosh) protein is UPF0053 protein MT1890.